The primary structure comprises 667 residues: Phosphomethylpyrimidine synthase (667 aa).

Substrate-binding positions include Asn235, Met264, Tyr293, His329, 349–351 (SRG), 390–393 (DGMR), and Glu429. Residue His433 coordinates Zn(2+). Tyr456 serves as a coordination point for substrate. His497 contributes to the Zn(2+) binding site. [4Fe-4S] cluster is bound by residues Cys577, Cys580, and Cys585. The tract at residues 618–642 (DSYTGSESDTAKRASQREQGMAQMS) is disordered.

It belongs to the ThiC family. Homodimer. Requires [4Fe-4S] cluster as cofactor.

It carries out the reaction 5-amino-1-(5-phospho-beta-D-ribosyl)imidazole + S-adenosyl-L-methionine = 4-amino-2-methyl-5-(phosphooxymethyl)pyrimidine + CO + 5'-deoxyadenosine + formate + L-methionine + 3 H(+). The protein operates within cofactor biosynthesis; thiamine diphosphate biosynthesis. In terms of biological role, catalyzes the synthesis of the hydroxymethylpyrimidine phosphate (HMP-P) moiety of thiamine from aminoimidazole ribotide (AIR) in a radical S-adenosyl-L-methionine (SAM)-dependent reaction. This chain is Phosphomethylpyrimidine synthase, found in Shewanella pealeana (strain ATCC 700345 / ANG-SQ1).